The primary structure comprises 356 residues: Leucine-rich repeat and transmembrane domain-containing protein 1 (356 aa).

The first 32 residues, 1 to 32 (MLNEGLCCGAWAMKGTLLLVSSVGLLLPGVGS), serve as a signal peptide directing secretion. The LRRNT domain occupies 33-62 (CPMKCLCHPSSNSVDCSGQGLSKVPRDLPP). Topologically, residues 33–299 (CPMKCLCHPS…PTNLRHAVAT (267 aa)) are extracellular. 5 LRR repeats span residues 63–84 (WTVT…AFQS), 87–108 (LLST…AFYG), 111–132 (HLRV…FAHA), 135–156 (GLRE…LGKP), and 159–180 (NLTV…LLEA). 2 N-linked (GlcNAc...) asparagine glycosylation sites follow: Asn92 and Asn116. N-linked (GlcNAc...) asparagine glycosylation is present at Asn159. One can recognise an LRRCT domain in the interval 192 to 246 (NPWICDCHLLGLKLWLERFTFQGGETDGAICRLPEPWQGKALLSIPHELYQPCSL). Polar residues predominate over residues 255–277 (LVQQPGSAPQDAQKSHENSSGQQ). The segment at 255–288 (LVQQPGSAPQDAQKSHENSSGQQDPLECEAKPKP) is disordered. The helical transmembrane segment at 300–320 (VVITGVVCGIVCLMMLAAAIY) threads the bilayer. At 321 to 356 (GCTYAAITAQYQGRPLASARKSEKMGSKELMDSSSA) the chain is on the cytoplasmic side.

Its subcellular location is the membrane. The protein is Leucine-rich repeat and transmembrane domain-containing protein 1 (Lrtm1) of Mus musculus (Mouse).